A 286-amino-acid chain; its full sequence is 2-dehydro-3-deoxyphosphooctonate aldolase (286 aa).

It belongs to the KdsA family.

The protein resides in the cytoplasm. It catalyses the reaction D-arabinose 5-phosphate + phosphoenolpyruvate + H2O = 3-deoxy-alpha-D-manno-2-octulosonate-8-phosphate + phosphate. It participates in carbohydrate biosynthesis; 3-deoxy-D-manno-octulosonate biosynthesis; 3-deoxy-D-manno-octulosonate from D-ribulose 5-phosphate: step 2/3. It functions in the pathway bacterial outer membrane biogenesis; lipopolysaccharide biosynthesis. In Shewanella denitrificans (strain OS217 / ATCC BAA-1090 / DSM 15013), this protein is 2-dehydro-3-deoxyphosphooctonate aldolase.